We begin with the raw amino-acid sequence, 242 residues long: Vacuole localized DSC protein 1 (242 aa).

2 consecutive transmembrane segments (helical) span residues 128 to 148 (PYGF…PTAF) and 152 to 172 (LLLV…INGS).

Part of the vacuole-localized DSC E3 ligase complex composed of at least TUL1, DSC2, DSC3, UBX3, CDC48 and VLD1.

It localises to the vacuole membrane. Component of the vacuole-localized DSC E3 ubiquitin ligase complex involved in the targeting of the complex to the vacuole membrane via the AP3 pathway to ubiquinate vacuolar membrane proteins. Competes with GLD1 to determine the subcellular localizations of the DSC complex. This Saccharomyces cerevisiae (strain ATCC 204508 / S288c) (Baker's yeast) protein is Vacuole localized DSC protein 1.